The chain runs to 249 residues: Indole-3-glycerol phosphate synthase (249 aa).

It belongs to the TrpC family.

It catalyses the reaction 1-(2-carboxyphenylamino)-1-deoxy-D-ribulose 5-phosphate + H(+) = (1S,2R)-1-C-(indol-3-yl)glycerol 3-phosphate + CO2 + H2O. Its pathway is amino-acid biosynthesis; L-tryptophan biosynthesis; L-tryptophan from chorismate: step 4/5. This chain is Indole-3-glycerol phosphate synthase, found in Pyrobaculum aerophilum (strain ATCC 51768 / DSM 7523 / JCM 9630 / CIP 104966 / NBRC 100827 / IM2).